Reading from the N-terminus, the 340-residue chain is UDP-N-acetylglucosamine--N-acetylmuramyl-(pentapeptide) pyrophosphoryl-undecaprenol N-acetylglucosamine transferase (340 aa).

Residues Thr15–Gly17, Asn127, Ser184, Ile230, and Gln275 each bind UDP-N-acetyl-alpha-D-glucosamine.

Belongs to the glycosyltransferase 28 family. MurG subfamily.

It localises to the cell inner membrane. The enzyme catalyses di-trans,octa-cis-undecaprenyl diphospho-N-acetyl-alpha-D-muramoyl-L-alanyl-D-glutamyl-meso-2,6-diaminopimeloyl-D-alanyl-D-alanine + UDP-N-acetyl-alpha-D-glucosamine = di-trans,octa-cis-undecaprenyl diphospho-[N-acetyl-alpha-D-glucosaminyl-(1-&gt;4)]-N-acetyl-alpha-D-muramoyl-L-alanyl-D-glutamyl-meso-2,6-diaminopimeloyl-D-alanyl-D-alanine + UDP + H(+). It participates in cell wall biogenesis; peptidoglycan biosynthesis. In terms of biological role, cell wall formation. Catalyzes the transfer of a GlcNAc subunit on undecaprenyl-pyrophosphoryl-MurNAc-pentapeptide (lipid intermediate I) to form undecaprenyl-pyrophosphoryl-MurNAc-(pentapeptide)GlcNAc (lipid intermediate II). The sequence is that of UDP-N-acetylglucosamine--N-acetylmuramyl-(pentapeptide) pyrophosphoryl-undecaprenol N-acetylglucosamine transferase from Vesicomyosocius okutanii subsp. Calyptogena okutanii (strain HA).